The chain runs to 268 residues: Endonuclease 8 1 (268 aa).

Proline 2 functions as the Schiff-base intermediate with DNA in the catalytic mechanism. Glutamate 3 serves as the catalytic Proton donor. Lysine 52 serves as the catalytic Proton donor; for beta-elimination activity. 2 residues coordinate DNA: arginine 125 and asparagine 166. An FPG-type zinc finger spans residues 234–268; that stretch reads YVYRRAGEPCRVCGGVIRTALLEGRNVFWCPVCQT. Arginine 258 (proton donor; for delta-elimination activity) is an active-site residue.

The protein belongs to the FPG family. Zn(2+) serves as cofactor.

The catalysed reaction is 2'-deoxyribonucleotide-(2'-deoxyribose 5'-phosphate)-2'-deoxyribonucleotide-DNA = a 3'-end 2'-deoxyribonucleotide-(2,3-dehydro-2,3-deoxyribose 5'-phosphate)-DNA + a 5'-end 5'-phospho-2'-deoxyribonucleoside-DNA + H(+). In terms of biological role, involved in base excision repair of DNA damaged by oxidation or by mutagenic agents. Acts as a DNA glycosylase that recognizes and removes damaged bases. Has AP (apurinic/apyrimidinic) lyase activity and introduces nicks in the DNA strand. Cleaves the DNA backbone by beta-delta elimination to generate a single-strand break at the site of the removed base with both 3'- and 5'-phosphates. This is Endonuclease 8 1 (nei1) from Mycobacterium bovis (strain ATCC BAA-935 / AF2122/97).